A 262-amino-acid polypeptide reads, in one-letter code: MTGELSPIDKAKFVAAKRAADLVEDGMRVGLGTGSTAAWLVRCLGDMVRKEGLKMRGVPTSTRTAQLAREVGIEVITLDEARWLDITIDGADEFDGDLNLIKGGGGALLQEKIVATASDQMVVIADLGKEVSRLGAFPLPVEVIPFGWQTTQALLEETLISMDVLGRTATLRMNGDTPFVTDEGNHILDLHLQRIGNARQLALVLNQIPGVVENGLFIDICDTVVVGHGDGRVEIRDINQGTVEHDRLDFVESDNLFTDLAD.

Residues 33–36, 89–92, and 102–105 each bind substrate; these read TGST, DGAD, and KGGG. The Proton acceptor role is filled by Glu-111. Lys-129 contributes to the substrate binding site.

Belongs to the ribose 5-phosphate isomerase family. In terms of assembly, homodimer.

It carries out the reaction aldehydo-D-ribose 5-phosphate = D-ribulose 5-phosphate. Its pathway is carbohydrate degradation; pentose phosphate pathway; D-ribose 5-phosphate from D-ribulose 5-phosphate (non-oxidative stage): step 1/1. Its function is as follows. Catalyzes the reversible conversion of ribose-5-phosphate to ribulose 5-phosphate. The protein is Ribose-5-phosphate isomerase A of Ruegeria pomeroyi (strain ATCC 700808 / DSM 15171 / DSS-3) (Silicibacter pomeroyi).